The primary structure comprises 438 residues: Serine hydroxymethyltransferase (438 aa).

Residues Leu133 and 137–139 each bind (6S)-5,6,7,8-tetrahydrofolate; that span reads GHL. Lys242 carries the post-translational modification N6-(pyridoxal phosphate)lysine.

Belongs to the SHMT family. In terms of assembly, homodimer. Requires pyridoxal 5'-phosphate as cofactor.

The protein localises to the cytoplasm. The enzyme catalyses (6R)-5,10-methylene-5,6,7,8-tetrahydrofolate + glycine + H2O = (6S)-5,6,7,8-tetrahydrofolate + L-serine. It participates in one-carbon metabolism; tetrahydrofolate interconversion. The protein operates within amino-acid biosynthesis; glycine biosynthesis; glycine from L-serine: step 1/1. Its function is as follows. Catalyzes the reversible interconversion of serine and glycine with tetrahydrofolate (THF) serving as the one-carbon carrier. This reaction serves as the major source of one-carbon groups required for the biosynthesis of purines, thymidylate, methionine, and other important biomolecules. Also exhibits THF-independent aldolase activity toward beta-hydroxyamino acids, producing glycine and aldehydes, via a retro-aldol mechanism. The polypeptide is Serine hydroxymethyltransferase (Brucella melitensis biotype 2 (strain ATCC 23457)).